The following is a 345-amino-acid chain: S-adenosylmethionine:tRNA ribosyltransferase-isomerase (345 aa).

It belongs to the QueA family. As to quaternary structure, monomer.

It localises to the cytoplasm. The catalysed reaction is 7-aminomethyl-7-carbaguanosine(34) in tRNA + S-adenosyl-L-methionine = epoxyqueuosine(34) in tRNA + adenine + L-methionine + 2 H(+). It functions in the pathway tRNA modification; tRNA-queuosine biosynthesis. In terms of biological role, transfers and isomerizes the ribose moiety from AdoMet to the 7-aminomethyl group of 7-deazaguanine (preQ1-tRNA) to give epoxyqueuosine (oQ-tRNA). This is S-adenosylmethionine:tRNA ribosyltransferase-isomerase from Shewanella sp. (strain ANA-3).